A 32-amino-acid chain; its full sequence is Alpha-2-macroglobulin homolog (32 aa).

Residues 16-19 constitute a cross-link (isoglutamyl cysteine thioester (Cys-Gln)); that stretch reads CGEQ.

The protein belongs to the protease inhibitor I39 (alpha-2-macroglobulin) family. As to quaternary structure, homodimer; disulfide-linked.

The protein resides in the secreted. Functionally, is able to inhibit all four classes of proteinases by a unique 'trapping' mechanism. This protein has a peptide stretch, called the 'bait region' which contains specific cleavage sites for different proteinases. When a proteinase cleaves the bait region, a conformational change is induced in the protein which traps the proteinase. The entrapped enzyme remains active against low molecular weight substrates (activity against high molecular weight substrates is greatly reduced). Following cleavage in the bait region a thioester bond is hydrolyzed and mediates the covalent binding of the protein to the proteinase. The sequence is that of Alpha-2-macroglobulin homolog from Pacifastacus leniusculus (Signal crayfish).